The chain runs to 225 residues: Glucosyl-3-phosphoglycerate phosphatase (225 aa).

Arg10 contacts substrate. His11 functions as the Tele-phosphohistidine intermediate in the catalytic mechanism. Substrate is bound at residue Arg60. Catalysis depends on Glu84, which acts as the Proton donor/acceptor. His158 contributes to the substrate binding site.

The protein belongs to the phosphoglycerate mutase family. In terms of assembly, homodimer.

It carries out the reaction (2R)-2-O-(alpha-D-glucopyranosyl)-3-phospho-glycerate + H2O = (2R)-2-O-(alpha-D-glucopyranosyl)-glycerate + phosphate. Its function is as follows. Involved in the biosynthesis of mycobacterial methylglucose lipopolysaccharides (MGLP). Catalyzes the dephosphorylation of glucosyl-3-phosphoglycerate (GPG) to glucosylglycerate. This chain is Glucosyl-3-phosphoglycerate phosphatase, found in Mycolicibacterium vanbaalenii (strain DSM 7251 / JCM 13017 / BCRC 16820 / KCTC 9966 / NRRL B-24157 / PYR-1) (Mycobacterium vanbaalenii).